Consider the following 138-residue polypeptide: Succinate dehydrogenase assembly factor 4, mitochondrial (138 aa).

A mitochondrion-targeting transit peptide spans 1 to 32 (MLCAIKSTGYRYPRTGALNLLRGRPFNMATRK). Residues 71–98 (QATGDRTKESLNSPLLTKNDIGSFSPEF) show a composition bias toward polar residues. The segment at 71-138 (QATGDRTKES…YSFNGRVTDF (68 aa)) is disordered.

This sequence belongs to the SDHAF4 family. In terms of assembly, interacts with SDH1 in its FAD-bound form.

The protein localises to the mitochondrion matrix. Its function is as follows. Plays an essential role in the assembly of succinate dehydrogenase (SDH), an enzyme complex (also referred to as respiratory complex II) that is a component of both the tricarboxylic acid (TCA) cycle and the mitochondrial electron transport chain, and which couples the oxidation of succinate to fumarate with the reduction of ubiquinone (coenzyme Q) to ubiquinol. Binds to the flavoprotein subunit SDH1 in its FAD-bound form, blocking the generation of excess reactive oxygen species (ROS) and facilitating its assembly with the iron-sulfur protein subunit SDH2 into the SDH catalytic dimer. This chain is Succinate dehydrogenase assembly factor 4, mitochondrial, found in Saccharomyces cerevisiae (strain ATCC 204508 / S288c) (Baker's yeast).